The sequence spans 353 residues: Guanine nucleotide-binding protein alpha-1 subunit (353 aa).

Residues 1–26 form a disordered region; the sequence is MGCGMSTEEKEGKARNEEIENQLKRD. The N-myristoyl glycine moiety is linked to residue G2. C3 is lipidated: S-palmitoyl cysteine. Over residues 7-26 the composition is skewed to basic and acidic residues; the sequence is TEEKEGKARNEEIENQLKRD. The region spanning 32–353 is the G-alpha domain; it reads NEIKMLLLGA…QENLRLCGLI (322 aa). Residues 35–48 form a G1 motif region; sequence KMLLLGAGESGKST. The GTP site is built by E43, S44, G45, K46, S47, T48, D150, L175, T181, G203, N269, K270, D272, and A325. Residue S47 participates in Mg(2+) binding. The interval 173-181 is G2 motif; the sequence is DVLRSRVKT. A Mg(2+)-binding site is contributed by T181. The interval 196 to 205 is G3 motif; that stretch reads YRMFDVGGQR. Positions 265-272 are G4 motif; sequence ILFLNKID. The tract at residues 323-328 is G5 motif; sequence TCATDT.

The protein belongs to the G-alpha family. G(q) subfamily. G proteins are composed of 3 units; alpha, beta and gamma. The alpha chain contains the guanine nucleotide binding site. Requires Mg(2+) as cofactor.

Its function is as follows. Guanine nucleotide-binding proteins (G proteins) are involved as modulators or transducers in various transmembrane signaling systems. This Neurospora crassa (strain ATCC 24698 / 74-OR23-1A / CBS 708.71 / DSM 1257 / FGSC 987) protein is Guanine nucleotide-binding protein alpha-1 subunit (gna-1).